The following is a 335-amino-acid chain: Dolichyl-diphosphooligosaccharide--protein glycosyltransferase subunit MAGT1 (335 aa).

The signal sequence occupies residues 1–29 (MAARWRFWCVSVTMVVALLIVCDVPSASA). The Extracellular segment spans residues 30–184 (QRKKEMVLSE…DVNIRVIRPP (155 aa)). The Thioredoxin domain maps to 47-175 (WTNKRPVIRM…IARWIADRTD (129 aa)). N71 carries N-linked (GlcNAc...) asparagine glycosylation. An intrachain disulfide couples C87 to C90. A helical transmembrane segment spans residues 185 to 205 (NYAGPLMLGLLLAVIGGLVYL). The Cytoplasmic portion of the chain corresponds to 206-209 (RRSN). A helical membrane pass occupies residues 210–230 (MEFLFNKTGWAFAALCFVLAM). At 231 to 270 (TSGQMWNHIRGPPYAHKNPHTGHVNYIHGSSQAQFVAETH) the chain is on the extracellular side. Residues 271-291 (IVLLFNGGVTLGMVLLCEAAT) traverse the membrane as a helical segment. At 292 to 300 (SDMDIGKRK) the chain is on the cytoplasmic side. The chain crosses the membrane as a helical span at residues 301–321 (IMCVAGIGLVVLFFSWMLSIF). Residues 322 to 335 (RSKYHGYPYSFLMS) are Extracellular-facing.

This sequence belongs to the OST3/OST6 family. In terms of assembly, accessory component of the STT3B-containing form of the oligosaccharyltransferase (OST) complex. OST exists in two different complex forms which contain common core subunits RPN1, RPN2, OST48, OST4, DAD1 and TMEM258, either STT3A or STT3B as catalytic subunits, and form-specific accessory subunits. OST can form stable complexes with the Sec61 complex or with both the Sec61 and TRAP complexes. The association of TUSC3 or MAGT1 with the STT3B-containing complex seems to be mutually exclusvice. Ubiquitous. Expressed at very low levels in brain, lung and kidney.

Its subcellular location is the cell membrane. It is found in the endoplasmic reticulum. The protein resides in the endoplasmic reticulum membrane. Its pathway is protein modification; protein glycosylation. In terms of biological role, accessory component of the STT3B-containing form of the N-oligosaccharyl transferase (OST) complex which catalyzes the transfer of a high mannose oligosaccharide from a lipid-linked oligosaccharide donor to an asparagine residue within an Asn-X-Ser/Thr consensus motif in nascent polypeptide chains. Involved in N-glycosylation of STT3B-dependent substrates. Specifically required for the glycosylation of a subset of acceptor sites that are near cysteine residues; in this function seems to act redundantly with TUSC3. In its oxidized form proposed to form transient mixed disulfides with a glycoprotein substrate to facilitate access of STT3B to the unmodified acceptor site. Also has oxidoreductase-independent functions in the STT3B-containing OST complex possibly involving substrate recognition. Could indirectly play a role in Mg(2+) transport in epithelial cells. The protein is Dolichyl-diphosphooligosaccharide--protein glycosyltransferase subunit MAGT1 of Homo sapiens (Human).